The sequence spans 364 residues: Aminomethyltransferase (364 aa).

The protein belongs to the GcvT family. The glycine cleavage system is composed of four proteins: P, T, L and H.

The catalysed reaction is N(6)-[(R)-S(8)-aminomethyldihydrolipoyl]-L-lysyl-[protein] + (6S)-5,6,7,8-tetrahydrofolate = N(6)-[(R)-dihydrolipoyl]-L-lysyl-[protein] + (6R)-5,10-methylene-5,6,7,8-tetrahydrofolate + NH4(+). In terms of biological role, the glycine cleavage system catalyzes the degradation of glycine. This chain is Aminomethyltransferase, found in Shewanella halifaxensis (strain HAW-EB4).